Here is a 356-residue protein sequence, read N- to C-terminus: MDTSRKIIHIDMDAFYASVEQRDHPEFRGKPLIIGGDPNKRGVVATCSYEARKFGVHSAMPTRQAAKLCPNGIFIHGNMAHYVEVSNQIREIFSRYTDIIEPLSLDEAYLDVTENKKGMKSATMVAREIQQTIYRELGLTASAGVSFNKFIAKIASDFKKPAGITVVAPEEAEAFLEQIPVTKFYGVGKVTAEKLHRLGIETGADLKKWSEWDLIRELHKHGYQLYRHVRGRSNNIVNPHRDRKSVGKETTFEFNVLDNRILEQSLMKFAKKVEERLIKLQKHGKTVVLKLRYSDFTTITKRLTLNEYTNDANQIYQAAALLLRESYKGQDSIRLIGLTVTNLKPVYFENLRLEGL.

The region spanning 1–188 (MDTSRKIIHI…IPVTKFYGVG (188 aa)) is the UmuC domain. Residues D11 and D106 each contribute to the Mg(2+) site. The active site involves E107.

This sequence belongs to the DNA polymerase type-Y family. As to quaternary structure, monomer. The cofactor is Mg(2+).

The protein localises to the cytoplasm. The enzyme catalyses DNA(n) + a 2'-deoxyribonucleoside 5'-triphosphate = DNA(n+1) + diphosphate. Its function is as follows. Poorly processive, error-prone DNA polymerase involved in untargeted mutagenesis. Copies undamaged DNA at stalled replication forks, which arise in vivo from mismatched or misaligned primer ends. These misaligned primers can be extended by PolIV. Exhibits no 3'-5' exonuclease (proofreading) activity. May be involved in translesional synthesis, in conjunction with the beta clamp from PolIII. The polypeptide is DNA polymerase IV (Listeria innocua serovar 6a (strain ATCC BAA-680 / CLIP 11262)).